Consider the following 1401-residue polypeptide: DNA-directed RNA polymerase subunit beta' (1401 aa).

Zn(2+) is bound by residues Cys70, Cys72, Cys85, and Cys88. Residues Asp460, Asp462, and Asp464 each contribute to the Mg(2+) site. 4 residues coordinate Zn(2+): Cys808, Cys882, Cys889, and Cys892.

Belongs to the RNA polymerase beta' chain family. The RNAP catalytic core consists of 2 alpha, 1 beta, 1 beta' and 1 omega subunit. When a sigma factor is associated with the core the holoenzyme is formed, which can initiate transcription. Mg(2+) serves as cofactor. Requires Zn(2+) as cofactor.

The enzyme catalyses RNA(n) + a ribonucleoside 5'-triphosphate = RNA(n+1) + diphosphate. Functionally, DNA-dependent RNA polymerase catalyzes the transcription of DNA into RNA using the four ribonucleoside triphosphates as substrates. The sequence is that of DNA-directed RNA polymerase subunit beta' from Legionella pneumophila (strain Paris).